The chain runs to 751 residues: Lysine decarboxylase LdcA (751 aa).

The protein belongs to the Orn/Lys/Arg decarboxylase class-I family. Homodecamer.

The enzyme catalyses L-lysine + H(+) = cadaverine + CO2. Plays an essential role in lysine utilization by acting as a lysine decarboxylase. This Pseudomonas aeruginosa (strain ATCC 15692 / DSM 22644 / CIP 104116 / JCM 14847 / LMG 12228 / 1C / PRS 101 / PAO1) protein is Lysine decarboxylase LdcA.